The sequence spans 603 residues: uncharacterized protein (603 aa).

A disordered region spans residues 257–281; that stretch reads AGEAASSDHDQKISRVTRKRPREPK.

This is an uncharacterized protein from Saccharomyces cerevisiae (strain ATCC 204508 / S288c) (Baker's yeast).